We begin with the raw amino-acid sequence, 128 residues long: Small ribosomal subunit protein uS8c (128 aa).

The protein belongs to the universal ribosomal protein uS8 family. In terms of assembly, part of the 30S ribosomal subunit.

The protein localises to the plastid. The protein resides in the chloroplast. Functionally, one of the primary rRNA binding proteins, it binds directly to 16S rRNA central domain where it helps coordinate assembly of the platform of the 30S subunit. The chain is Small ribosomal subunit protein uS8c (rps8) from Welwitschia mirabilis (Tree tumbo).